We begin with the raw amino-acid sequence, 825 residues long: Lon protease (825 aa).

The region spanning 41–237 is the Lon N-terminal domain; sequence LPIIFIPNTI…KVIQLLLEQK (197 aa). 388 to 395 contacts ATP; the sequence is GPPGTGKT. In terms of domain architecture, Lon proteolytic spans 625 to 805; the sequence is SNPPGVVTGL…DEVLYEALGL (181 aa). Active-site residues include S711 and K754.

This sequence belongs to the peptidase S16 family. Homohexamer. Organized in a ring with a central cavity.

It is found in the cytoplasm. It carries out the reaction Hydrolysis of proteins in presence of ATP.. In terms of biological role, ATP-dependent serine protease that mediates the selective degradation of mutant and abnormal proteins as well as certain short-lived regulatory proteins. Required for cellular homeostasis and for survival from DNA damage and developmental changes induced by stress. Degrades polypeptides processively to yield small peptide fragments that are 5 to 10 amino acids long. Binds to DNA in a double-stranded, site-specific manner. In Methanosphaera stadtmanae (strain ATCC 43021 / DSM 3091 / JCM 11832 / MCB-3), this protein is Lon protease.